Consider the following 262-residue polypeptide: tRNA (guanine-N(1)-)-methyltransferase (262 aa).

Residues G113 and 137 to 142 contribute to the S-adenosyl-L-methionine site; that span reads IGDYVL.

It belongs to the RNA methyltransferase TrmD family. As to quaternary structure, homodimer.

The protein localises to the cytoplasm. It catalyses the reaction guanosine(37) in tRNA + S-adenosyl-L-methionine = N(1)-methylguanosine(37) in tRNA + S-adenosyl-L-homocysteine + H(+). Its function is as follows. Specifically methylates guanosine-37 in various tRNAs. In Saccharopolyspora erythraea (strain ATCC 11635 / DSM 40517 / JCM 4748 / NBRC 13426 / NCIMB 8594 / NRRL 2338), this protein is tRNA (guanine-N(1)-)-methyltransferase.